A 439-amino-acid chain; its full sequence is Ribosomal protein uS12 methylthiotransferase RimO (439 aa).

The region spanning 2-114 (SKLYLMSLGC…IDEMILKKTN (113 aa)) is the MTTase N-terminal domain. Cysteine 11, cysteine 45, cysteine 77, cysteine 146, cysteine 150, and cysteine 153 together coordinate [4Fe-4S] cluster. Residues 132–363 (TGSNSHAFIK…VDEVIEKSFE (232 aa)) enclose the Radical SAM core domain.

This sequence belongs to the methylthiotransferase family. RimO subfamily. [4Fe-4S] cluster is required as a cofactor.

The protein resides in the cytoplasm. The catalysed reaction is L-aspartate(89)-[ribosomal protein uS12]-hydrogen + (sulfur carrier)-SH + AH2 + 2 S-adenosyl-L-methionine = 3-methylsulfanyl-L-aspartate(89)-[ribosomal protein uS12]-hydrogen + (sulfur carrier)-H + 5'-deoxyadenosine + L-methionine + A + S-adenosyl-L-homocysteine + 2 H(+). In terms of biological role, catalyzes the methylthiolation of an aspartic acid residue of ribosomal protein uS12. This Campylobacter jejuni subsp. jejuni serotype O:23/36 (strain 81-176) protein is Ribosomal protein uS12 methylthiotransferase RimO.